Consider the following 310-residue polypeptide: Protease HtpX homolog (310 aa).

A run of 2 helical transmembrane segments spans residues 7-27 (SVML…LIGG) and 29-49 (AGMT…YWYS). Zn(2+) is bound at residue His131. The active site involves Glu132. His135 contacts Zn(2+). The next 2 membrane-spanning stretches (helical) occupy residues 141–161 (ILIG…ASMA) and 178–198 (PLGF…AALI). Glu207 is a binding site for Zn(2+). Residues 277 to 310 (LTGARPQSGGAPSGPERTARNAEDSAKDFWDSLK) form a disordered region. Residues 293-310 (RTARNAEDSAKDFWDSLK) are compositionally biased toward basic and acidic residues.

This sequence belongs to the peptidase M48B family. Zn(2+) is required as a cofactor.

It localises to the cell inner membrane. This is Protease HtpX homolog from Desulfatibacillum aliphaticivorans.